The sequence spans 675 residues: Myosin-binding protein 3 (675 aa).

The helical transmembrane segment at 17–37 threads the bilayer; sequence ITVILVYAFLEWLLMFFIFLN. 2 disordered regions span residues 225–274 and 286–315; these read LRSI…EEET and SKNF…TPTS. Positions 238–251 are enriched in basic and acidic residues; the sequence is AKSRVSEDEQRNDD. A GTD-binding domain is found at 355 to 453; that stretch reads RTIERLRETV…QLQRELEVYR (99 aa). The segment covering 474-496 has biased composition (acidic residues); it reads CEADDDDKEEENREEDNSSEMDV. Disordered regions lie at residues 474-497, 542-565, and 582-605; these read CEAD…MDVD, DKES…GHGG, and AENE…GSDS. The segment covering 596–605 has biased composition (basic and acidic residues); the sequence is SDEKNFGSDS. The stretch at 605–633 forms a coiled coil; that stretch reads SEKLEIIKQVDSVYERLQELETDGEFLKN.

As to quaternary structure, interacts with myosin XI-K.

The protein localises to the membrane. Its function is as follows. Membrane-anchored myosin receptors that define a distinct, plant-specific transport vesicle compartment. The protein is Myosin-binding protein 3 of Arabidopsis thaliana (Mouse-ear cress).